Consider the following 103-residue polypeptide: Large ribosomal subunit protein eL14 (103 aa).

It belongs to the eukaryotic ribosomal protein eL14 family.

In Ignicoccus hospitalis (strain KIN4/I / DSM 18386 / JCM 14125), this protein is Large ribosomal subunit protein eL14.